We begin with the raw amino-acid sequence, 373 residues long: Carbamoyl phosphate synthase small chain (373 aa).

The segment at 1-179 (MSGKAQLVLE…AYIVEPEGPP (179 aa)) is CPSase. Residues Ser47, Gly230, and Gly232 each coordinate L-glutamine. The Glutamine amidotransferase type-1 domain maps to 182–373 (TVAALDLGIK…QFIELMEGDR (192 aa)). Residue Cys258 is the Nucleophile of the active site. L-glutamine contacts are provided by Phe259, Gln262, Asn300, Gly302, and Phe303. Catalysis depends on residues His348 and Glu350.

This sequence belongs to the CarA family. Composed of two chains; the small (or glutamine) chain promotes the hydrolysis of glutamine to ammonia, which is used by the large (or ammonia) chain to synthesize carbamoyl phosphate. Tetramer of heterodimers (alpha,beta)4.

It catalyses the reaction hydrogencarbonate + L-glutamine + 2 ATP + H2O = carbamoyl phosphate + L-glutamate + 2 ADP + phosphate + 2 H(+). The catalysed reaction is L-glutamine + H2O = L-glutamate + NH4(+). Its pathway is amino-acid biosynthesis; L-arginine biosynthesis; carbamoyl phosphate from bicarbonate: step 1/1. It functions in the pathway pyrimidine metabolism; UMP biosynthesis via de novo pathway; (S)-dihydroorotate from bicarbonate: step 1/3. Its function is as follows. Small subunit of the glutamine-dependent carbamoyl phosphate synthetase (CPSase). CPSase catalyzes the formation of carbamoyl phosphate from the ammonia moiety of glutamine, carbonate, and phosphate donated by ATP, constituting the first step of 2 biosynthetic pathways, one leading to arginine and/or urea and the other to pyrimidine nucleotides. The small subunit (glutamine amidotransferase) binds and cleaves glutamine to supply the large subunit with the substrate ammonia. The sequence is that of Carbamoyl phosphate synthase small chain from Mycolicibacterium paratuberculosis (strain ATCC BAA-968 / K-10) (Mycobacterium paratuberculosis).